A 287-amino-acid chain; its full sequence is Proline iminopeptidase (287 aa).

In terms of domain architecture, AB hydrolase-1 spans 22–271; it reads PLVLLHGGPG…RSRHMAFIDE (250 aa). Residue serine 98 is the Nucleophile of the active site. The active site involves aspartate 238. Histidine 265 acts as the Proton donor in catalysis.

This sequence belongs to the peptidase S33 family.

It is found in the cell envelope. It carries out the reaction Release of N-terminal proline from a peptide.. Functionally, releases the N-terminal proline from various substrates. This chain is Proline iminopeptidase, found in Lactiplantibacillus plantarum (strain ATCC BAA-793 / NCIMB 8826 / WCFS1) (Lactobacillus plantarum).